The following is a 95-amino-acid chain: Aspartyl/glutamyl-tRNA(Asn/Gln) amidotransferase subunit C (95 aa).

The protein belongs to the GatC family. As to quaternary structure, heterotrimer of A, B and C subunits.

It carries out the reaction L-glutamyl-tRNA(Gln) + L-glutamine + ATP + H2O = L-glutaminyl-tRNA(Gln) + L-glutamate + ADP + phosphate + H(+). The catalysed reaction is L-aspartyl-tRNA(Asn) + L-glutamine + ATP + H2O = L-asparaginyl-tRNA(Asn) + L-glutamate + ADP + phosphate + 2 H(+). Its function is as follows. Allows the formation of correctly charged Asn-tRNA(Asn) or Gln-tRNA(Gln) through the transamidation of misacylated Asp-tRNA(Asn) or Glu-tRNA(Gln) in organisms which lack either or both of asparaginyl-tRNA or glutaminyl-tRNA synthetases. The reaction takes place in the presence of glutamine and ATP through an activated phospho-Asp-tRNA(Asn) or phospho-Glu-tRNA(Gln). This Pseudomonas syringae pv. syringae (strain B728a) protein is Aspartyl/glutamyl-tRNA(Asn/Gln) amidotransferase subunit C.